Consider the following 259-residue polypeptide: 5'-nucleotidase SurE (259 aa).

D8, D9, S40, and N92 together coordinate a divalent metal cation.

This sequence belongs to the SurE nucleotidase family. A divalent metal cation serves as cofactor.

It localises to the cytoplasm. It carries out the reaction a ribonucleoside 5'-phosphate + H2O = a ribonucleoside + phosphate. Nucleotidase that shows phosphatase activity on nucleoside 5'-monophosphates. This chain is 5'-nucleotidase SurE, found in Stenotrophomonas maltophilia (strain K279a).